The primary structure comprises 59 residues: Large ribosomal subunit protein bL32 (59 aa).

It belongs to the bacterial ribosomal protein bL32 family.

The protein is Large ribosomal subunit protein bL32 of Rhizorhabdus wittichii (strain DSM 6014 / CCUG 31198 / JCM 15750 / NBRC 105917 / EY 4224 / RW1) (Sphingomonas wittichii).